A 394-amino-acid polypeptide reads, in one-letter code: Argininosuccinate synthase (394 aa).

8 to 16 (AYSGGLDTS) contributes to the ATP binding site. Positions 86 and 91 each coordinate L-citrulline. Gly-116 contributes to the ATP binding site. L-aspartate contacts are provided by Thr-118, Asn-122, and Asp-123. Asn-122 contacts L-citrulline. L-citrulline is bound by residues Arg-126, Ser-172, Ser-181, Glu-257, and Tyr-269.

The protein belongs to the argininosuccinate synthase family. Type 1 subfamily. In terms of assembly, homotetramer.

It localises to the cytoplasm. It carries out the reaction L-citrulline + L-aspartate + ATP = 2-(N(omega)-L-arginino)succinate + AMP + diphosphate + H(+). The protein operates within amino-acid biosynthesis; L-arginine biosynthesis; L-arginine from L-ornithine and carbamoyl phosphate: step 2/3. The polypeptide is Argininosuccinate synthase (Methanosarcina acetivorans (strain ATCC 35395 / DSM 2834 / JCM 12185 / C2A)).